A 266-amino-acid chain; its full sequence is Elongator complex protein 6 (266 aa).

The protein belongs to the ELP6 family. Component of the elongator complex which consists of ELP1, ELP2, ELP3, ELP4, ELP5 and ELP6.

Its subcellular location is the cytoplasm. It is found in the nucleus. The protein operates within tRNA modification; 5-methoxycarbonylmethyl-2-thiouridine-tRNA biosynthesis. Component of the elongator complex which is required for multiple tRNA modifications, including mcm5U (5-methoxycarbonylmethyl uridine), mcm5s2U (5-methoxycarbonylmethyl-2-thiouridine), and ncm5U (5-carbamoylmethyl uridine). The elongator complex catalyzes formation of carboxymethyluridine in the wobble base at position 34 in tRNAs. Involved in cell migration. The sequence is that of Elongator complex protein 6 from Homo sapiens (Human).